Reading from the N-terminus, the 166-residue chain is Putative 4-hydroxy-4-methyl-2-oxoglutarate aldolase (166 aa).

Residues 74-77 (GDQI) and R96 contribute to the substrate site. D97 is a binding site for a divalent metal cation.

It belongs to the class II aldolase/RraA-like family. In terms of assembly, homotrimer. It depends on a divalent metal cation as a cofactor.

The enzyme catalyses 4-hydroxy-4-methyl-2-oxoglutarate = 2 pyruvate. The catalysed reaction is oxaloacetate + H(+) = pyruvate + CO2. Catalyzes the aldol cleavage of 4-hydroxy-4-methyl-2-oxoglutarate (HMG) into 2 molecules of pyruvate. Also contains a secondary oxaloacetate (OAA) decarboxylase activity due to the common pyruvate enolate transition state formed following C-C bond cleavage in the retro-aldol and decarboxylation reactions. This Xanthomonas oryzae pv. oryzae (strain MAFF 311018) protein is Putative 4-hydroxy-4-methyl-2-oxoglutarate aldolase.